The following is a 255-amino-acid chain: uncharacterized protein (255 aa).

Asn16 and Asn58 each carry an N-linked (GlcNAc...) asparagine; by host glycan. 2 consecutive transmembrane segments (helical) span residues 72–92 and 104–124; these read LIYS…TIYY and LWYI…SHIC.

Its subcellular location is the membrane. This is an uncharacterized protein from Acanthamoeba polyphaga (Amoeba).